Reading from the N-terminus, the 181-residue chain is Inner membrane-spanning protein YciB (181 aa).

The next 5 helical transmembrane spans lie at 3-23 (LLFDFFPIVLFFIVYKFFGIY), 54-74 (SLAIIMVLGGATLFFQNPWFI), 81-101 (IYWLSALVFYGSSYIGSKPLI), 119-139 (LNLAWTLFFIVMGALNLYVAY), and 149-169 (FKLFGGVGFTLLFVLIQAFYL).

Belongs to the YciB family.

The protein localises to the cell inner membrane. Plays a role in cell envelope biogenesis, maintenance of cell envelope integrity and membrane homeostasis. This Legionella pneumophila subsp. pneumophila (strain Philadelphia 1 / ATCC 33152 / DSM 7513) protein is Inner membrane-spanning protein YciB.